A 75-amino-acid polypeptide reads, in one-letter code: Translation initiation factor IF-1 1 (75 aa).

The S1-like domain occupies Met-1–Arg-74.

Belongs to the IF-1 family. In terms of assembly, component of the 30S ribosomal translation pre-initiation complex which assembles on the 30S ribosome in the order IF-2 and IF-3, IF-1 and N-formylmethionyl-tRNA(fMet); mRNA recruitment can occur at any time during PIC assembly.

It is found in the cytoplasm. Functionally, one of the essential components for the initiation of protein synthesis. Stabilizes the binding of IF-2 and IF-3 on the 30S subunit to which N-formylmethionyl-tRNA(fMet) subsequently binds. Helps modulate mRNA selection, yielding the 30S pre-initiation complex (PIC). Upon addition of the 50S ribosomal subunit IF-1, IF-2 and IF-3 are released leaving the mature 70S translation initiation complex. The chain is Translation initiation factor IF-1 1 from Symbiobacterium thermophilum (strain DSM 24528 / JCM 14929 / IAM 14863 / T).